The chain runs to 105 residues: uncharacterized protein (105 aa).

The chain crosses the membrane as a helical span at residues 29–49 (NAFLLILSEAYLLFVFLSYLI).

The protein localises to the membrane. This is an uncharacterized protein from Saccharomyces cerevisiae (strain ATCC 204508 / S288c) (Baker's yeast).